The following is a 127-amino-acid chain: Fluoride-specific ion channel FluC (127 aa).

4 helical membrane passes run 4–24 (SILA…FLGL), 36–56 (GTLL…AYFA), 68–88 (LIIT…AEVV), and 99–119 (AAGA…LGLF). Gly-75 and Thr-78 together coordinate Na(+).

The protein belongs to the fluoride channel Fluc/FEX (TC 1.A.43) family.

Its subcellular location is the cell inner membrane. The enzyme catalyses fluoride(in) = fluoride(out). With respect to regulation, na(+) is not transported, but it plays an essential structural role and its presence is essential for fluoride channel function. Its function is as follows. Fluoride-specific ion channel. Important for reducing fluoride concentration in the cell, thus reducing its toxicity. The chain is Fluoride-specific ion channel FluC from Pseudomonas aeruginosa (strain UCBPP-PA14).